The primary structure comprises 228 residues: Demethylmenaquinone methyltransferase (228 aa).

S-adenosyl-L-methionine-binding positions include threonine 62, aspartate 80, 100 to 101 (DA), and serine 117.

The protein belongs to the class I-like SAM-binding methyltransferase superfamily. MenG/UbiE family.

It catalyses the reaction a 2-demethylmenaquinol + S-adenosyl-L-methionine = a menaquinol + S-adenosyl-L-homocysteine + H(+). It functions in the pathway quinol/quinone metabolism; menaquinone biosynthesis; menaquinol from 1,4-dihydroxy-2-naphthoate: step 2/2. In terms of biological role, methyltransferase required for the conversion of demethylmenaquinol (DMKH2) to menaquinol (MKH2). The protein is Demethylmenaquinone methyltransferase of Mycolicibacterium gilvum (strain PYR-GCK) (Mycobacterium gilvum (strain PYR-GCK)).